Consider the following 364-residue polypeptide: 3-isopropylmalate dehydrogenase (364 aa).

Position 79 to 92 (79 to 92 (GPKWEHLPAAEQPE)) interacts with NAD(+). Substrate contacts are provided by arginine 100, arginine 110, arginine 139, and aspartate 228. Mg(2+)-binding residues include aspartate 228, aspartate 252, and aspartate 256. Position 286-298 (286-298 (GSAPDIAGKDIAN)) interacts with NAD(+).

The protein belongs to the isocitrate and isopropylmalate dehydrogenases family. LeuB type 1 subfamily. Homodimer. Requires Mg(2+) as cofactor. Mn(2+) serves as cofactor.

The protein localises to the cytoplasm. The catalysed reaction is (2R,3S)-3-isopropylmalate + NAD(+) = 4-methyl-2-oxopentanoate + CO2 + NADH. It functions in the pathway amino-acid biosynthesis; L-leucine biosynthesis; L-leucine from 3-methyl-2-oxobutanoate: step 3/4. Catalyzes the oxidation of 3-carboxy-2-hydroxy-4-methylpentanoate (3-isopropylmalate) to 3-carboxy-4-methyl-2-oxopentanoate. The product decarboxylates to 4-methyl-2 oxopentanoate. The sequence is that of 3-isopropylmalate dehydrogenase from Sodalis glossinidius (strain morsitans).